The chain runs to 223 residues: DNA mismatch repair protein MutH (223 aa).

It belongs to the MutH family.

It is found in the cytoplasm. Functionally, sequence-specific endonuclease that cleaves unmethylated GATC sequences. It is involved in DNA mismatch repair. This chain is DNA mismatch repair protein MutH, found in Shewanella sp. (strain W3-18-1).